A 97-amino-acid polypeptide reads, in one-letter code: ATP-dependent Clp protease adapter protein ClpS (97 aa).

This sequence belongs to the ClpS family. As to quaternary structure, binds to the N-terminal domain of the chaperone ClpA.

Functionally, involved in the modulation of the specificity of the ClpAP-mediated ATP-dependent protein degradation. The protein is ATP-dependent Clp protease adapter protein ClpS of Nautilia profundicola (strain ATCC BAA-1463 / DSM 18972 / AmH).